The sequence spans 174 residues: Cytochrome c-550-like protein (174 aa).

A signal peptide spans 1-37 (MPGQTQGAKRWRVPGRGWRWAGILLLVWLGLASPAAG). Heme c is bound by residues C82, C85, H86, and C136.

This sequence belongs to the cytochrome c family. PsbV subfamily. It depends on heme c as a cofactor.

Its subcellular location is the cellular thylakoid membrane. In terms of biological role, possible low-potential cytochrome c. The polypeptide is Cytochrome c-550-like protein (psbV2) (Synechococcus sp. (strain JA-3-3Ab) (Cyanobacteria bacterium Yellowstone A-Prime)).